Consider the following 572-residue polypeptide: AAA ATPase forming ring-shaped complexes (572 aa).

The span at 1–18 (MTTASQQTSSHSTASSTS) shows a compositional bias: low complexity. The tract at residues 1–30 (MTTASQQTSSHSTASSTSRKGNNNDATPSL) is disordered. The stretch at 42-70 (TRNAKLVEMLKASRDKLDALNEQIRALSD) forms a coiled coil. 258 to 263 (GCGKTL) provides a ligand contact to ATP. Positions 543 to 572 (VAHHNRKTTTETEATEPEGTDSGKGHTDAS) are disordered. Residues 563-572 (DSGKGHTDAS) show a composition bias toward basic and acidic residues.

This sequence belongs to the AAA ATPase family. Homohexamer. Assembles into a hexameric ring structure.

The polypeptide is AAA ATPase forming ring-shaped complexes (Corynebacterium kroppenstedtii (strain DSM 44385 / JCM 11950 / CIP 105744 / CCUG 35717)).